Reading from the N-terminus, the 90-residue chain is Phosphocarrier protein HPr (90 aa).

Positions Met-1–Gly-89 constitute an HPr domain. Catalysis depends on His-15, which acts as the Pros-phosphohistidine intermediate.

It belongs to the HPr family.

The protein resides in the cytoplasm. In terms of biological role, general (non sugar-specific) component of the phosphoenolpyruvate-dependent sugar phosphotransferase system (sugar PTS). This major carbohydrate active-transport system catalyzes the phosphorylation of incoming sugar substrates concomitantly with their translocation across the cell membrane. The phosphoryl group from phosphoenolpyruvate (PEP) is transferred to the phosphoryl carrier protein HPr by enzyme I. Phospho-HPr then transfers it to the PTS EIIA domain. This is Phosphocarrier protein HPr (ptsH) from Pseudomonas putida (Arthrobacter siderocapsulatus).